The primary structure comprises 586 residues: MVTHRQRYREKVSQMVSWGHWFALFNILLATLLGSRYLFVADWPTTLAGRIYSYLSIVGHFSFLVFATYLLILFPLTFIVMSQRLMRFLSAILATAGMTLLLIDSEVFTRFHLHLNPIVWELVINPDQNEMARDWQLMFISVPVILLIEMLFATWSWQKLRSLTRRRHFARPLAAFFFVSFIASHLIYIWADANFYRPITMQRANLPLSYPMTARRFLEKHGLLDAQEYQRRLVEQGNPEAVSVQYPLSNLHYRDMGTGQNVLLITVDGLNYSRFEKQMPELATFAEQNIDFTRHMSSGNTTDNGIFGLFYGISPGYMDGVLSTRTPAALITALNQQGYQLGLFSSDGFASPLYRQALLSDFSMPAAQTQSDAQTASQWIDWLGRYAQEDNRWFSWISFSGTNIDDSNQKNFVKRYASAASDVDAQINRVLNALREAGKFDNTVVIITAGRGIPLTPEENRFDWSQGHLQVPLVIHWPGTPAQRINVLTDHTDVMTTLMQRLLHVSTPANEYSQGQDIFTVPRRHNWVTAADGSTLAITTPQMTLVLNNNGHYQTYDLHGEKIKDQKPQLSLLLQVLTEEKRFIAN.

The Cytoplasmic portion of the chain corresponds to 1–20 (MVTHRQRYREKVSQMVSWGH). Residues 21–43 (WFALFNILLATLLGSRYLFVADW) form a helical membrane-spanning segment. At 44–57 (PTTLAGRIYSYLSI) the chain is on the periplasmic side. A helical transmembrane segment spans residues 58 to 80 (VGHFSFLVFATYLLILFPLTFIV). The Cytoplasmic segment spans residues 81–84 (MSQR). Residues 85-103 (LMRFLSAILATAGMTLLLI) form a helical membrane-spanning segment. Residues 104 to 134 (DSEVFTRFHLHLNPIVWELVINPDQNEMARD) are Periplasmic-facing. The chain crosses the membrane as a helical span at residues 135–157 (WQLMFISVPVILLIEMLFATWSW). Residues 158–168 (QKLRSLTRRRH) lie on the Cytoplasmic side of the membrane. Residues 169-191 (FARPLAAFFFVSFIASHLIYIWA) traverse the membrane as a helical segment. At 192-586 (DANFYRPITM…LTEEKRFIAN (395 aa)) the chain is on the periplasmic side.

It to H.influenzae HI_0842.

It localises to the cell inner membrane. The sequence is that of Inner membrane protein YejM (yejM) from Salmonella typhi.